Reading from the N-terminus, the 487-residue chain is Glutamyl-tRNA(Gln) amidotransferase subunit A (487 aa).

Active-site charge relay system residues include Lys78 and Ser153. Ser177 acts as the Acyl-ester intermediate in catalysis.

The protein belongs to the amidase family. GatA subfamily. As to quaternary structure, heterotrimer of A, B and C subunits.

The enzyme catalyses L-glutamyl-tRNA(Gln) + L-glutamine + ATP + H2O = L-glutaminyl-tRNA(Gln) + L-glutamate + ADP + phosphate + H(+). Functionally, allows the formation of correctly charged Gln-tRNA(Gln) through the transamidation of misacylated Glu-tRNA(Gln) in organisms which lack glutaminyl-tRNA synthetase. The reaction takes place in the presence of glutamine and ATP through an activated gamma-phospho-Glu-tRNA(Gln). In Oleidesulfovibrio alaskensis (strain ATCC BAA-1058 / DSM 17464 / G20) (Desulfovibrio alaskensis), this protein is Glutamyl-tRNA(Gln) amidotransferase subunit A.